Here is a 209-residue protein sequence, read N- to C-terminus: Large ribosomal subunit protein uL3 (209 aa).

Positions 128–163 (FGGGSRTHGQSDRLRAPGSVGGSSDPSRTFRGTRMA) are disordered.

Belongs to the universal ribosomal protein uL3 family. In terms of assembly, part of the 50S ribosomal subunit. Forms a cluster with proteins L14 and L19.

Functionally, one of the primary rRNA binding proteins, it binds directly near the 3'-end of the 23S rRNA, where it nucleates assembly of the 50S subunit. The polypeptide is Large ribosomal subunit protein uL3 (Chlorobium phaeobacteroides (strain DSM 266 / SMG 266 / 2430)).